The following is an 804-amino-acid chain: Phenylalanine--tRNA ligase beta subunit (804 aa).

One can recognise a tRNA-binding domain in the interval 39–147 (GEGLDSVVTA…PDCEPGQPVF (109 aa)). In terms of domain architecture, B5 spans 401 to 480 (LAERKVTLAV…RLNGYDNIPV (80 aa)). Asp-458, Asp-464, Glu-467, and Glu-468 together coordinate Mg(2+). The FDX-ACB domain maps to 711 to 804 (SRFPQVARDS…LIAKLGAEIR (94 aa)).

The protein belongs to the phenylalanyl-tRNA synthetase beta subunit family. Type 1 subfamily. As to quaternary structure, tetramer of two alpha and two beta subunits. It depends on Mg(2+) as a cofactor.

The protein localises to the cytoplasm. It carries out the reaction tRNA(Phe) + L-phenylalanine + ATP = L-phenylalanyl-tRNA(Phe) + AMP + diphosphate + H(+). This chain is Phenylalanine--tRNA ligase beta subunit, found in Syntrophotalea carbinolica (strain DSM 2380 / NBRC 103641 / GraBd1) (Pelobacter carbinolicus).